Consider the following 1125-residue polypeptide: Telomerase reverse transcriptase (1125 aa).

The interval 1–239 (MPRAPRCPAV…TKRLLSLTST (239 aa)) is RNA-interacting domain 1. Residues 58 to 205 (VPWGSQPPPA…RPVGGNFTNL (148 aa)) form a GQ motif region. Residues 137-141 (WMLLL) form a required for regulating specificity for telomeric DNA and for processivity for primer elongation region. The span at 206-216 (GSAHQIKNSGH) shows a compositional bias: polar residues. Residues 206-304 (GSAHQIKNSG…ASDPSLSGSV (99 aa)) form a disordered region. The segment at 240–328 (NVPSAKKARF…PPQDAEKLRP (89 aa)) is linker. Basic and acidic residues predominate over residues 247–259 (ARFEPALRVDKGP). Low complexity predominate over residues 273-287 (APSPAASPKVPPAAK). Residues 306 to 528 (CKHKPSSSSL…VPAAEHRLRE (223 aa)) form a required for oligomerization region. Positions 329-540 (FTETRHFLYS…LAMFLFWLMD (212 aa)) are RNA-interacting domain 2. The short motif at 332-337 (TRHFLY) is the TFLY; involved in RNA binding element. The QFP motif stretch occupies residues 381–511 (FCRTRRLPRR…VKVEDCHWLR (131 aa)). A CP motif region spans residues 402-422 (LMNHAKCQYVRFLRSHCRFRT). Phosphoserine; by DYRK2 is present on serine 447. One can recognise a Reverse transcriptase domain in the interval 595 to 928 (EVKHHQDTWL…CLFPWCGLLL (334 aa)). At tyrosine 697 the chain carries Phosphotyrosine; by SRC-type Tyr-kinases. Positions 702, 861, and 862 each coordinate Mg(2+). The segment at 907–921 (LGGAAPHQLPAHCLF) is required for oligomerization. Residues 923–927 (WCGLL) form a primer grip sequence region. Residues 929–1125 (DTRTLEVFCD…LSTDFQTILD (197 aa)) are CTE.

The protein belongs to the reverse transcriptase family. Telomerase subfamily. In terms of assembly, catalytic component of the telomerase holoenzyme complex composed of one molecule of TERT, one molecule of WRAP53/TCAB1, two molecules of H/ACA ribonucleoprotein complex subunits DKC1, NOP10, NHP2 and GAR1, and a telomerase RNA template component (TERC). The telomerase holoenzyme complex is associated with TEP1, SMG6/EST1A and POT1. The molecular chaperone HSP90/P23 complex is required for correct assembly and stabilization of the active telomerase. Interacts directly with HSP90A and PTGES3. Interacts with HSPA1A; the interaction occurs in the absence of TERC and dissociates once the complex has formed. Interacts with RAN; the interaction promotes nuclear export of TERT. Interacts with XPO1. Interacts with PTPN11; the interaction retains TERT in the nucleus. Interacts with NCL (via RRM1 and C-terminal RRM4/Arg/Gly-rich domains); the interaction is important for nucleolar localization of TERT. Interacts with SMARCA4 (via the bromodomain); the interaction regulates Wnt-mediated signaling. Interacts with MCRS1 (isoform MCRS2); the interaction inhibits in vitro telomerase activity. Interacts with PIF1; the interaction has no effect on the elongation activity of TERT. Interacts with PML; the interaction recruits TERT to PML bodies and inhibits telomerase activity. Interacts with GNL3L. Interacts with isoform 1 and isoform 2 of NVL. Interacts with DHX36. Interacts with ATF7. Phosphorylation at Tyr-697 under oxidative stress leads to translocation of TERT to the cytoplasm and reduces its antiapoptotic activity. Dephosphorylated by SHP2/PTPN11 leading to nuclear retention. Phosphorylation at the G2/M phase at Ser-447 by DYRK2 promotes ubiquitination by the EDVP complex and degradation. In terms of processing, ubiquitinated by the EDVP complex, a E3 ligase complex following phosphorylation at Ser-447 by DYRK2. Ubiquitinated leads to proteasomal degradation. Isoform 1 and isoform 2 expressed in thymus, liver, spleen, lung, kidney and testis. High level of inactive isoform 3 in adult hippocampus, low level in heart, cortex and cerebellum.

It is found in the nucleus. The protein localises to the nucleolus. Its subcellular location is the nucleoplasm. It localises to the chromosome. The protein resides in the telomere. It is found in the cytoplasm. The protein localises to the PML body. It catalyses the reaction DNA(n) + a 2'-deoxyribonucleoside 5'-triphosphate = DNA(n+1) + diphosphate. Its function is as follows. Telomerase is a ribonucleoprotein enzyme essential for the replication of chromosome termini in most eukaryotes. Active in progenitor and cancer cells. Inactive, or very low activity, in normal somatic cells. Catalytic component of the teleromerase holoenzyme complex whose main activity is the elongation of telomeres by acting as a reverse transcriptase that adds simple sequence repeats to chromosome ends by copying a template sequence within the RNA component of the enzyme. Catalyzes the RNA-dependent extension of 3'-chromosomal termini with the 6-nucleotide telomeric repeat unit, 5'-TTAGGG-3'. The catalytic cycle involves primer binding, primer extension and release of product once the template boundary has been reached or nascent product translocation followed by further extension. More active on substrates containing 2 or 3 telomeric repeats. Telomerase activity is regulated by a number of factors including telomerase complex-associated proteins, chaperones and polypeptide modifiers. Modulates Wnt signaling. Plays important roles in aging and antiapoptosis. This chain is Telomerase reverse transcriptase, found in Rattus norvegicus (Rat).